A 194-amino-acid polypeptide reads, in one-letter code: MGMYKYIREAWKSPKKSYVGELLKQRMIKWRREPVVVRIERPTRLDRARALGYQAKQGYVIVRVRVRKGGRKRPRWKGGRKPSKMGQVKYSPKKSLQWIAEEKAARKFPNLEVLNSYWVGEDGMYKWFEVIMVDPHHPVIKSDPKIAWIALKHHKGRVFRGLTSAGKKGRGLRNKGKGAEKVRPSIRANEGKGK.

A disordered region spans residues 165 to 194; the sequence is AGKKGRGLRNKGKGAEKVRPSIRANEGKGK. The segment covering 167-176 has biased composition (basic residues); that stretch reads KKGRGLRNKG. Residues 177–194 are compositionally biased toward basic and acidic residues; sequence KGAEKVRPSIRANEGKGK.

This sequence belongs to the eukaryotic ribosomal protein eL15 family. In terms of assembly, part of the 50S ribosomal subunit.

In Pyrococcus furiosus (strain ATCC 43587 / DSM 3638 / JCM 8422 / Vc1), this protein is Large ribosomal subunit protein eL15.